The following is a 275-amino-acid chain: Rhamnulose-1-phosphate aldolase (275 aa).

Glu-117 is a catalytic residue. His-141, His-143, and His-212 together coordinate Zn(2+).

The protein belongs to the aldolase class II family. RhaD subfamily. Homotetramer. Requires Zn(2+) as cofactor.

It localises to the cytoplasm. It carries out the reaction L-rhamnulose 1-phosphate = (S)-lactaldehyde + dihydroxyacetone phosphate. The protein operates within carbohydrate degradation; L-rhamnose degradation; glycerone phosphate from L-rhamnose: step 3/3. Its function is as follows. Catalyzes the reversible cleavage of L-rhamnulose-1-phosphate to dihydroxyacetone phosphate (DHAP) and L-lactaldehyde. The chain is Rhamnulose-1-phosphate aldolase from Salmonella paratyphi B (strain ATCC BAA-1250 / SPB7).